Here is a 235-residue protein sequence, read N- to C-terminus: Thiopurine S-methyltransferase (235 aa).

Residues Trp13, Leu48, Glu69, and Arg126 each contribute to the S-adenosyl-L-methionine site. Residues 199 to 235 (PDPQNGAPRRVEHKVYQLTGKRPASPEADGRAAETED) form a disordered region. The segment covering 226-235 (ADGRAAETED) has biased composition (basic and acidic residues).

The protein belongs to the class I-like SAM-binding methyltransferase superfamily. TPMT family.

Its subcellular location is the cytoplasm. It carries out the reaction S-adenosyl-L-methionine + a thiopurine = S-adenosyl-L-homocysteine + a thiopurine S-methylether.. The polypeptide is Thiopurine S-methyltransferase (Stutzerimonas stutzeri (strain A1501) (Pseudomonas stutzeri)).